A 126-amino-acid chain; its full sequence is Large ribosomal subunit protein uL22 (126 aa).

The protein belongs to the universal ribosomal protein uL22 family. In terms of assembly, part of the 50S ribosomal subunit.

Its function is as follows. This protein binds specifically to 23S rRNA; its binding is stimulated by other ribosomal proteins, e.g. L4, L17, and L20. It is important during the early stages of 50S assembly. It makes multiple contacts with different domains of the 23S rRNA in the assembled 50S subunit and ribosome. In terms of biological role, the globular domain of the protein is located near the polypeptide exit tunnel on the outside of the subunit, while an extended beta-hairpin is found that lines the wall of the exit tunnel in the center of the 70S ribosome. This chain is Large ribosomal subunit protein uL22, found in Zymomonas mobilis subsp. mobilis (strain ATCC 31821 / ZM4 / CP4).